The primary structure comprises 313 residues: Small glutamine-rich tetratricopeptide repeat-containing protein alpha (313 aa).

The tract at residues 66–100 (ATGKEMPQDLRSPARTPPSEEDSAEAERLKTEGNE) is disordered. A Phosphoserine modification is found at Ser77. Thr81 bears the Phosphothreonine mark. Residue Ser84 is modified to Phosphoserine. The span at 90-100 (EAERLKTEGNE) shows a compositional bias: basic and acidic residues. 3 TPR repeats span residues 91–124 (AERL…NPAN), 125–158 (AVYF…DPAY), and 159–192 (SKAY…DPDN). An N6-acetyllysine modification is found at Lys137. The tract at residues 250–269 (MISGGNNPLGTPGTSPSQND) is disordered. Ser301 carries the phosphoserine modification. At Thr303 the chain carries Phosphothreonine. Ser305 bears the Phosphoserine mark.

The protein belongs to the SGT family. In terms of assembly, homodimer. Homooligomer. Interacts with DNAJC5 and DNAJC5B. Interacts (via TPR repeats) with HSP90AA1. Interacts (via Gln-rich region) with SLC2A1. Interacts with HSP90AB1. Interacts (via TPR repeats) with HSPA8/Hsc70; the interaction is direct. Interacts with BAG6 (via ubiquitin-like domain); interaction prevents interaction between BAG6 and RNF126. Forms a multiprotein complex, at least composed of DNAJB12, DNAJB14, HSPA8/Hsc70 and SGTA; interaction with DNAJB14 and HSPA8/Hsc70 is direct. As to quaternary structure, (Microbial infection) Interacts with Vpu and Gag from HIV-1. (Microbial infection) Interacts with SARS-CoV accessory protein 7a. In terms of tissue distribution, ubiquitous.

Its subcellular location is the cytoplasm. It is found in the nucleus. Its function is as follows. Co-chaperone that binds misfolded and hydrophobic patches-containing client proteins in the cytosol. Mediates their targeting to the endoplasmic reticulum but also regulates their sorting to the proteasome when targeting fails. Functions in tail-anchored/type II transmembrane proteins membrane insertion constituting with ASNA1 and the BAG6 complex a targeting module. Functions upstream of the BAG6 complex and ASNA1, binding more rapidly the transmembrane domain of newly synthesized proteins. It is also involved in the regulation of the endoplasmic reticulum-associated misfolded protein catabolic process via its interaction with BAG6: collaborates with the BAG6 complex to maintain hydrophobic substrates in non-ubiquitinated states. Competes with RNF126 for interaction with BAG6, preventing the ubiquitination of client proteins associated with the BAG6 complex. Binds directly to HSC70 and HSP70 and regulates their ATPase activity. (Microbial infection) In case of infection by polyomavirus, involved in the virus endoplasmic reticulum membrane penetration and infection via interaction with DNAJB12, DNAJB14 and HSPA8/Hsc70. The sequence is that of Small glutamine-rich tetratricopeptide repeat-containing protein alpha (SGTA) from Homo sapiens (Human).